The following is a 312-amino-acid chain: Methionyl-tRNA formyltransferase (312 aa).

A (6S)-5,6,7,8-tetrahydrofolate-binding site is contributed by 109–112 (SLLP).

This sequence belongs to the Fmt family.

The enzyme catalyses L-methionyl-tRNA(fMet) + (6R)-10-formyltetrahydrofolate = N-formyl-L-methionyl-tRNA(fMet) + (6S)-5,6,7,8-tetrahydrofolate + H(+). Its function is as follows. Attaches a formyl group to the free amino group of methionyl-tRNA(fMet). The formyl group appears to play a dual role in the initiator identity of N-formylmethionyl-tRNA by promoting its recognition by IF2 and preventing the misappropriation of this tRNA by the elongation apparatus. The sequence is that of Methionyl-tRNA formyltransferase from Nitrosospira multiformis (strain ATCC 25196 / NCIMB 11849 / C 71).